Consider the following 429-residue polypeptide: UDP-N-acetylglucosamine 1-carboxyvinyltransferase (429 aa).

22–23 (KN) provides a ligand contact to phosphoenolpyruvate. R102 is a UDP-N-acetyl-alpha-D-glucosamine binding site. C126 serves as the catalytic Proton donor. Residue C126 is modified to 2-(S-cysteinyl)pyruvic acid O-phosphothioketal. UDP-N-acetyl-alpha-D-glucosamine is bound by residues 131-135 (RPVDL), D316, and I338.

Belongs to the EPSP synthase family. MurA subfamily.

The protein localises to the cytoplasm. It carries out the reaction phosphoenolpyruvate + UDP-N-acetyl-alpha-D-glucosamine = UDP-N-acetyl-3-O-(1-carboxyvinyl)-alpha-D-glucosamine + phosphate. Its pathway is cell wall biogenesis; peptidoglycan biosynthesis. In terms of biological role, cell wall formation. Adds enolpyruvyl to UDP-N-acetylglucosamine. The polypeptide is UDP-N-acetylglucosamine 1-carboxyvinyltransferase (Methylocella silvestris (strain DSM 15510 / CIP 108128 / LMG 27833 / NCIMB 13906 / BL2)).